Consider the following 334-residue polypeptide: Cathepsin R (334 aa).

A signal peptide spans 1–17 (MAAVVFIAFLYLGVASG). Positions 18 to 114 (VPVLDSSLDA…SIMKREAGSI (97 aa)) are cleaved as a propeptide — activation peptide. 2 disulfides stabilise this stretch: C136/C179 and C170/C212. The active site involves C139. The N-linked (GlcNAc...) asparagine glycan is linked to N269. A disulfide bridge links C270 with C323. Active-site residues include H277 and N301.

This sequence belongs to the peptidase C1 family. As to expression, placenta.

The protein localises to the lysosome. The chain is Cathepsin R (Ctsr) from Mus musculus (Mouse).